We begin with the raw amino-acid sequence, 144 residues long: DNA-directed RNA polymerases II and V subunit 6B (144 aa).

Acidic residues predominate over residues 1–32 (MADDDYNEVDDLGYEDEPAEPEIEEGVEEDAD). Positions 1 to 62 (MADDDYNEVD…EPVQRPRKTS (62 aa)) are disordered. A compositionally biased stretch (basic and acidic residues) spans 46–56 (TEDKVETEPVQ).

It belongs to the archaeal Rpo6/eukaryotic RPB6 RNA polymerase subunit family. In terms of assembly, component of the RNA polymerase II and V complexes.

The protein resides in the nucleus. In terms of biological role, DNA-dependent RNA polymerase catalyzes the transcription of DNA into RNA using the four ribonucleoside triphosphates as substrates. Component of RNA polymerase II which synthesizes mRNA precursors and many functional non-coding RNAs. Pol II is the central component of the basal RNA polymerase II transcription machinery. It is composed of mobile elements that move relative to each other. Component of RNA polymerase V which mediates RNA-directed DNA methylation-dependent (RdDM) transcriptional gene silencing (TGS) of endogenous repeated sequences, including transposable elements. This chain is DNA-directed RNA polymerases II and V subunit 6B (NRPB6B), found in Arabidopsis thaliana (Mouse-ear cress).